A 72-amino-acid chain; its full sequence is MDGKAPAAFVEPGEFNEVMKRLDKIDEKIEFVNSEVAQKIGKKVGRDIGILYGGFIGLLLFLIYTVVSSMFM.

The helical transmembrane segment at 48–68 threads the bilayer; the sequence is IGILYGGFIGLLLFLIYTVVS.

Belongs to the MtrG family. In terms of assembly, the complex is composed of 8 subunits; MtrA, MtrB, MtrC, MtrD, MtrE, MtrF, MtrG and MtrH.

The protein localises to the cell membrane. It carries out the reaction 5-methyl-5,6,7,8-tetrahydromethanopterin + coenzyme M + 2 Na(+)(in) = 5,6,7,8-tetrahydromethanopterin + methyl-coenzyme M + 2 Na(+)(out). It participates in one-carbon metabolism; methanogenesis from CO(2); methyl-coenzyme M from 5,10-methylene-5,6,7,8-tetrahydromethanopterin: step 2/2. Functionally, part of a complex that catalyzes the formation of methyl-coenzyme M and tetrahydromethanopterin from coenzyme M and methyl-tetrahydromethanopterin. This is an energy-conserving, sodium-ion translocating step. The chain is Tetrahydromethanopterin S-methyltransferase subunit G from Methanosarcina barkeri (strain Fusaro / DSM 804).